Consider the following 89-residue polypeptide: UPF0335 protein Nham_1221 (89 aa).

Belongs to the UPF0335 family.

This Nitrobacter hamburgensis (strain DSM 10229 / NCIMB 13809 / X14) protein is UPF0335 protein Nham_1221.